The chain runs to 293 residues: Probable xyloglucan endotransglucosylase/hydrolase protein 7 (293 aa).

The first 29 residues, methionine 1–serine 29, serve as a signal peptide directing secretion. The 194-residue stretch at arginine 30–tyrosine 223 folds into the GH16 domain. Glutamate 109 serves as the catalytic Nucleophile. The Proton donor role is filled by glutamate 113. Glutamate 113 contacts xyloglucan. N-linked (GlcNAc...) asparagine glycosylation occurs at asparagine 117. Xyloglucan contacts are provided by residues glutamine 126–asparagine 128, aspartate 136–glutamate 138, aspartate 202–tryptophan 203, and glycine 207. The N-linked (GlcNAc...) asparagine glycan is linked to asparagine 213. Cystine bridges form between cysteine 231-cysteine 239 and cysteine 276-cysteine 289. Arginine 281 serves as a coordination point for xyloglucan.

Belongs to the glycosyl hydrolase 16 family. XTH group 1 subfamily. Post-translationally, contains at least one intrachain disulfide bond essential for its enzymatic activity.

Its subcellular location is the secreted. It is found in the cell wall. The protein resides in the extracellular space. The protein localises to the apoplast. It carries out the reaction breaks a beta-(1-&gt;4) bond in the backbone of a xyloglucan and transfers the xyloglucanyl segment on to O-4 of the non-reducing terminal glucose residue of an acceptor, which can be a xyloglucan or an oligosaccharide of xyloglucan.. Functionally, catalyzes xyloglucan endohydrolysis (XEH) and/or endotransglycosylation (XET). Cleaves and religates xyloglucan polymers, an essential constituent of the primary cell wall, and thereby participates in cell wall construction of growing tissues. The sequence is that of Probable xyloglucan endotransglucosylase/hydrolase protein 7 (XTH7) from Arabidopsis thaliana (Mouse-ear cress).